The primary structure comprises 252 residues: Mediator of RNA polymerase II transcription subunit 8 (252 aa).

A coiled-coil region spans residues 6–30 (QDQIKTLEQSRQRLVQLTRSLASLI). The disordered stretch occupies residues 170-252 (RQLEDEDEEE…MTTGIPPTQR (83 aa)). Positions 173 to 196 (EDEDEEESESESEEEGEGEEEEME) are enriched in acidic residues.

The protein belongs to the Mediator complex subunit 8 family. As to quaternary structure, component of the Mediator complex.

Its subcellular location is the nucleus. In terms of biological role, component of the Mediator complex, a coactivator involved in the regulated transcription of nearly all RNA polymerase II-dependent genes. Mediator functions as a bridge to convey information from gene-specific regulatory proteins to the basal RNA polymerase II transcription machinery. Mediator is recruited to promoters by direct interactions with regulatory proteins and serves as a scaffold for the assembly of a functional preinitiation complex with RNA polymerase II and the general transcription factors. The chain is Mediator of RNA polymerase II transcription subunit 8 (med8) from Neosartorya fischeri (strain ATCC 1020 / DSM 3700 / CBS 544.65 / FGSC A1164 / JCM 1740 / NRRL 181 / WB 181) (Aspergillus fischerianus).